We begin with the raw amino-acid sequence, 194 residues long: Large ribosomal subunit protein eL15 (194 aa).

The segment at 162-194 (LTSAGRKSRGLRNKGKGAEKVRPSVRANKGKTK) is disordered. Positions 167-176 (RKSRGLRNKG) are enriched in basic residues.

The protein belongs to the eukaryotic ribosomal protein eL15 family.

This Thermococcus onnurineus (strain NA1) protein is Large ribosomal subunit protein eL15.